The primary structure comprises 276 residues: Formamidopyrimidine-DNA glycosylase (276 aa).

Catalysis depends on Pro-2, which acts as the Schiff-base intermediate with DNA. Glu-3 serves as the catalytic Proton donor. The active-site Proton donor; for beta-elimination activity is the Lys-58. Positions 92, 111, and 154 each coordinate DNA. Residues 239–273 form an FPG-type zinc finger; that stretch reads QVYGHAGEECSSCGTILEKIKVNGRGTTFCPHCQV. The active-site Proton donor; for delta-elimination activity is the Arg-263.

Belongs to the FPG family. In terms of assembly, monomer. Zn(2+) serves as cofactor.

It carries out the reaction Hydrolysis of DNA containing ring-opened 7-methylguanine residues, releasing 2,6-diamino-4-hydroxy-5-(N-methyl)formamidopyrimidine.. The catalysed reaction is 2'-deoxyribonucleotide-(2'-deoxyribose 5'-phosphate)-2'-deoxyribonucleotide-DNA = a 3'-end 2'-deoxyribonucleotide-(2,3-dehydro-2,3-deoxyribose 5'-phosphate)-DNA + a 5'-end 5'-phospho-2'-deoxyribonucleoside-DNA + H(+). Involved in base excision repair of DNA damaged by oxidation or by mutagenic agents. Acts as a DNA glycosylase that recognizes and removes damaged bases. Has a preference for oxidized purines, such as 7,8-dihydro-8-oxoguanine (8-oxoG). Has AP (apurinic/apyrimidinic) lyase activity and introduces nicks in the DNA strand. Cleaves the DNA backbone by beta-delta elimination to generate a single-strand break at the site of the removed base with both 3'- and 5'-phosphates. The protein is Formamidopyrimidine-DNA glycosylase of Lactobacillus gasseri (strain ATCC 33323 / DSM 20243 / BCRC 14619 / CIP 102991 / JCM 1131 / KCTC 3163 / NCIMB 11718 / NCTC 13722 / AM63).